A 101-amino-acid polypeptide reads, in one-letter code: Small ribosomal subunit protein uS14 (101 aa).

This sequence belongs to the universal ribosomal protein uS14 family. Part of the 30S ribosomal subunit. Contacts proteins S3 and S10.

Binds 16S rRNA, required for the assembly of 30S particles and may also be responsible for determining the conformation of the 16S rRNA at the A site. The chain is Small ribosomal subunit protein uS14 from Polynucleobacter necessarius subsp. necessarius (strain STIR1).